The chain runs to 700 residues: Protein UL29/28 (700 aa).

Residues 1–30 are disordered; it reads MSGRRKGCSAATASSSSSSPPSRLPLPGHA. A compositionally biased stretch (low complexity) spans 9-21; that stretch reads SAATASSSSSSPP.

Belongs to the herpesviridae US22 family. In terms of assembly, interacts with UL38 and host HDAC1; these interactions are necessary for the HDAC1 interaction with UL38. Interacts with host MTA2.

It localises to the virion. The protein resides in the host nucleus. The protein localises to the host cytoplasm. Contributes to activation of immediate-early gene expression. The chain is Protein UL29/28 (UL29) from Human cytomegalovirus (strain Merlin) (HHV-5).